We begin with the raw amino-acid sequence, 422 residues long: Phospho-N-acetylmuramoyl-pentapeptide-transferase (422 aa).

Transmembrane regions (helical) follow at residues 28 to 48, 71 to 91, 95 to 115, 136 to 156, 211 to 231, 239 to 259, 279 to 299, 313 to 333, and 399 to 419; these read LMAV…FINL, VGVP…PCLL, LDNI…SLGF, IIGQ…SPDV, AGWF…SNGA, GMAA…AYVS, LVIY…YNAY, IGGI…IPIL, and KITV…IITL.

Belongs to the glycosyltransferase 4 family. MraY subfamily. Mg(2+) serves as cofactor.

It localises to the cell inner membrane. It catalyses the reaction UDP-N-acetyl-alpha-D-muramoyl-L-alanyl-gamma-D-glutamyl-meso-2,6-diaminopimeloyl-D-alanyl-D-alanine + di-trans,octa-cis-undecaprenyl phosphate = di-trans,octa-cis-undecaprenyl diphospho-N-acetyl-alpha-D-muramoyl-L-alanyl-D-glutamyl-meso-2,6-diaminopimeloyl-D-alanyl-D-alanine + UMP. It functions in the pathway cell wall biogenesis; peptidoglycan biosynthesis. Functionally, catalyzes the initial step of the lipid cycle reactions in the biosynthesis of the cell wall peptidoglycan: transfers peptidoglycan precursor phospho-MurNAc-pentapeptide from UDP-MurNAc-pentapeptide onto the lipid carrier undecaprenyl phosphate, yielding undecaprenyl-pyrophosphoryl-MurNAc-pentapeptide, known as lipid I. In Bacteroides thetaiotaomicron (strain ATCC 29148 / DSM 2079 / JCM 5827 / CCUG 10774 / NCTC 10582 / VPI-5482 / E50), this protein is Phospho-N-acetylmuramoyl-pentapeptide-transferase.